We begin with the raw amino-acid sequence, 239 residues long: Tumor protein p53-inducible nuclear protein 1 (239 aa).

Positions 25 to 37 match the LIR motif; sequence EKEDDEWILVDFI.

In terms of assembly, interacts with p53/TP53 and HIPK2. Interacts with PRKCG, GABARAP, GABARAPL1, GABARAPL2, MAP1LC3A, MAP1LC3B and MAP1LC3C. In terms of tissue distribution, specifically expressed by acinar cells of chronic pancreatitis tissue.

It is found in the cytoplasm. The protein resides in the cytosol. It localises to the nucleus. The protein localises to the PML body. Its subcellular location is the cytoplasmic vesicle. It is found in the autophagosome. Its function is as follows. Antiproliferative and proapoptotic protein involved in cell stress response which acts as a dual regulator of transcription and autophagy. Acts as a positive regulator of autophagy. In response to cellular stress or activation of autophagy, relocates to autophagosomes where it interacts with autophagosome-associated proteins GABARAP, GABARAPL1/L2, MAP1LC3A/B/C and regulates autophagy. Acts as an antioxidant and plays a major role in p53/TP53-driven oxidative stress response. Possesses both a p53/TP53-independent intracellular reactive oxygen species (ROS) regulatory function and a p53/TP53-dependent transcription regulatory function. Positively regulates p53/TP53 and p73/TP73 and stimulates their capacity to induce apoptosis and regulate cell cycle. In response to double-strand DNA breaks, promotes p53/TP53 phosphorylation on 'Ser-46' and subsequent apoptosis. Acts as a tumor suppressor by inducing cell death by an autophagy and caspase-dependent mechanism. Can reduce cell migration by regulating the expression of SPARC. This is Tumor protein p53-inducible nuclear protein 1 (Trp53inp1) from Rattus norvegicus (Rat).